A 228-amino-acid polypeptide reads, in one-letter code: Protein crossbronx homolog (228 aa).

The region spanning 14–168 (LQEYKILAEY…VEQCVEDSQR (155 aa)) is the UBC core domain.

Belongs to the ubiquitin-conjugating enzyme family. FTS subfamily.

This chain is Protein crossbronx homolog, found in Anopheles gambiae (African malaria mosquito).